Here is a 71-residue protein sequence, read N- to C-terminus: Large ribosomal subunit protein bL31 (71 aa).

Cys-16, Cys-18, Cys-38, and Cys-41 together coordinate Zn(2+).

It belongs to the bacterial ribosomal protein bL31 family. Type A subfamily. Part of the 50S ribosomal subunit. Zn(2+) serves as cofactor.

In terms of biological role, binds the 23S rRNA. This chain is Large ribosomal subunit protein bL31, found in Laribacter hongkongensis (strain HLHK9).